The following is a 430-amino-acid chain: Tryptophan synthase beta chain (430 aa).

Lys95 bears the N6-(pyridoxal phosphate)lysine mark.

It belongs to the TrpB family. Tetramer of two alpha and two beta chains. It depends on pyridoxal 5'-phosphate as a cofactor.

It catalyses the reaction (1S,2R)-1-C-(indol-3-yl)glycerol 3-phosphate + L-serine = D-glyceraldehyde 3-phosphate + L-tryptophan + H2O. The protein operates within amino-acid biosynthesis; L-tryptophan biosynthesis; L-tryptophan from chorismate: step 5/5. The beta subunit is responsible for the synthesis of L-tryptophan from indole and L-serine. The polypeptide is Tryptophan synthase beta chain (Halobacterium salinarum (strain ATCC 29341 / DSM 671 / R1)).